The primary structure comprises 67 residues: ATP synthase F(0) complex subunit 8 (67 aa).

The helical transmembrane segment at 8-24 threads the bilayer; sequence TWFINIVSMILTLFIVF. Lys54 carries the post-translational modification N6-acetyllysine; alternate. Lys54 is modified (N6-succinyllysine; alternate). Residue Lys57 is modified to N6-acetyllysine.

The protein belongs to the ATPase protein 8 family. Component of the ATP synthase complex composed at least of ATP5F1A/subunit alpha, ATP5F1B/subunit beta, ATP5MC1/subunit c (homooctomer), MT-ATP6/subunit a, MT-ATP8/subunit 8, ATP5ME/subunit e, ATP5MF/subunit f, ATP5MG/subunit g, ATP5MK/subunit k, ATP5MJ/subunit j, ATP5F1C/subunit gamma, ATP5F1D/subunit delta, ATP5F1E/subunit epsilon, ATP5PF/subunit F6, ATP5PB/subunit b, ATP5PD/subunit d, ATP5PO/subunit OSCP. ATP synthase complex consists of a soluble F(1) head domain (subunits alpha(3) and beta(3)) - the catalytic core - and a membrane F(0) domain - the membrane proton channel (subunits c, a, 8, e, f, g, k and j). These two domains are linked by a central stalk (subunits gamma, delta, and epsilon) rotating inside the F1 region and a stationary peripheral stalk (subunits F6, b, d, and OSCP). Interacts with PRICKLE3.

It localises to the mitochondrion membrane. Its function is as follows. Subunit 8, of the mitochondrial membrane ATP synthase complex (F(1)F(0) ATP synthase or Complex V) that produces ATP from ADP in the presence of a proton gradient across the membrane which is generated by electron transport complexes of the respiratory chain. ATP synthase complex consist of a soluble F(1) head domain - the catalytic core - and a membrane F(1) domain - the membrane proton channel. These two domains are linked by a central stalk rotating inside the F(1) region and a stationary peripheral stalk. During catalysis, ATP synthesis in the catalytic domain of F(1) is coupled via a rotary mechanism of the central stalk subunits to proton translocation. In vivo, can only synthesize ATP although its ATP hydrolase activity can be activated artificially in vitro. Part of the complex F(0) domain. The sequence is that of ATP synthase F(0) complex subunit 8 from Equus asinus (Donkey).